The chain runs to 544 residues: Probable protein kinase UbiB (544 aa).

Residues D123 to L501 form the Protein kinase domain. ATP contacts are provided by residues L129 to V137 and K152. Catalysis depends on D287, which acts as the Proton acceptor. A helical transmembrane segment spans residues L515 to F537.

This sequence belongs to the ABC1 family. UbiB subfamily.

It localises to the cell inner membrane. It participates in cofactor biosynthesis; ubiquinone biosynthesis [regulation]. Its function is as follows. Is probably a protein kinase regulator of UbiI activity which is involved in aerobic coenzyme Q (ubiquinone) biosynthesis. This chain is Probable protein kinase UbiB, found in Aliivibrio fischeri (strain MJ11) (Vibrio fischeri).